The primary structure comprises 208 residues: Attacin-A (208 aa).

The N-terminal stretch at 1-20 (MQSFKICFFISCLSVVLVKG) is a signal peptide. The propeptide occupies 21–47 (QFGGTVSSNPNGGLDVNARLSKTIGDP).

As to expression, hemolymph and fat body.

It localises to the secreted. In terms of biological role, hemolymph antibacterial protein against Gram-negative bacteria. The polypeptide is Attacin-A (Glossina morsitans morsitans (Savannah tsetse fly)).